Reading from the N-terminus, the 164-residue chain is Interferon gamma (164 aa).

The signal sequence occupies residues 1 to 19 (MTCQTYNLFVLSVIMIYYG). N-linked (GlcNAc...) asparagine glycans are attached at residues asparagine 42 and asparagine 61.

This sequence belongs to the type II (or gamma) interferon family. In terms of assembly, homodimer.

The protein localises to the secreted. Its function is as follows. Produced by lymphocytes activated by specific antigens or mitogens. IFN-gamma, in addition to having antiviral activity, has important immunoregulatory functions. It is a potent activator of macrophages, it has antiproliferative effects on transformed cells and it can potentiate the antiviral and antitumor effects of the type I interferons. This Meleagris gallopavo (Wild turkey) protein is Interferon gamma (IFNG).